Reading from the N-terminus, the 115-residue chain is Putative HNH nuclease YajD (115 aa).

The HNH domain occupies 27 to 75; the sequence is CGRCSREFVYSNLRELTVHHIDHDHTNNPEDGSNWELLCLYCHDHEHSK.

The protein belongs to the HNH nuclease family.

This Escherichia coli O157:H7 protein is Putative HNH nuclease YajD (yajD).